Consider the following 364-residue polypeptide: Formimidoylglutamase (364 aa).

Histidine 133, aspartate 189, histidine 191, aspartate 193, aspartate 286, and aspartate 288 together coordinate Mn(2+).

The protein belongs to the arginase family. Requires Mn(2+) as cofactor.

It catalyses the reaction N-formimidoyl-L-glutamate + H2O = formamide + L-glutamate. The protein operates within amino-acid degradation; L-histidine degradation into L-glutamate; L-glutamate from N-formimidoyl-L-glutamate (hydrolase route): step 1/1. Catalyzes the conversion of N-formimidoyl-L-glutamate to L-glutamate and formamide. The protein is Formimidoylglutamase of Photobacterium profundum (strain SS9).